We begin with the raw amino-acid sequence, 813 residues long: Serine/threonine-protein kinase kin-29 (813 aa).

A Protein kinase domain is found at 18–269; it reads YDVGRAIGKG…IQNVLAHRWM (252 aa). ATP contacts are provided by residues 24-32 and Lys47; that span reads IGKGNFATV. Asp140 serves as the catalytic Proton acceptor. The disordered stretch occupies residues 383-412; the sequence is LSSPDCDSDDSSNSDLCDESPLSSLEPNHK. The segment covering 388 to 400 has biased composition (acidic residues); sequence CDSDDSSNSDLCD.

This sequence belongs to the protein kinase superfamily. CAMK Ser/Thr protein kinase family. SNF1 subfamily. In terms of assembly, interacts with tax-6. Mg(2+) serves as cofactor. In terms of processing, autophosphorylated. Elevated cAMP levels appears to act via PKA to directly or indirectly phosphorylate multiple sites on kin-29 and inhibit function.

It is found in the cytoplasm. Its subcellular location is the nucleus. It carries out the reaction L-seryl-[protein] + ATP = O-phospho-L-seryl-[protein] + ADP + H(+). The enzyme catalyses L-threonyl-[protein] + ATP = O-phospho-L-threonyl-[protein] + ADP + H(+). Regulates chemoreceptor expression by phosphorylating the hda-4 class II histone deacetylase (HDAC) and inhibiting the gene repression functions of hda-4 and the mef-2 transcription factor, enabling the correct sensing and transduction of food signals. Role in determining body size, the dauer decision and serotonin-mediated egg laying. May modulate the Sma/Mab pathway and regulates development in the later larval stages. This chain is Serine/threonine-protein kinase kin-29, found in Caenorhabditis briggsae.